We begin with the raw amino-acid sequence, 1269 residues long: Clustered mitochondria protein homolog (1269 aa).

Residues 297–552 (PSNNGDFMRT…NTNPVDIEFV (256 aa)) enclose the Clu domain. The segment covering 958–969 (EKKKEESKKAAA) has biased composition (basic and acidic residues). The segment at 958–989 (EKKKEESKKAAADGEDAGSSGATSKEEEQAKE) is disordered. 2 TPR repeats span residues 1020–1053 (VSSYLLLSNMYSRLGQYSQAVTFCNKAALLSERC) and 1147–1180 (GQNESRIANLYTSLDDMSHALSHIEKAKSIFSKE). The segment at 1211-1269 (LASAQQATKPANISQKKGKKSSSSSPALTNKSVDELLQFIEGPGASKSSKKSKKKHTKN) is disordered. The span at 1213 to 1223 (SAQQATKPANI) shows a compositional bias: polar residues. The span at 1258 to 1269 (SSKKSKKKHTKN) shows a compositional bias: basic residues.

Belongs to the CLU family. In terms of assembly, may associate with the eukaryotic translation initiation factor 3 (eIF-3) complex.

It is found in the cytoplasm. Functionally, mRNA-binding protein involved in proper cytoplasmic distribution of mitochondria. The polypeptide is Clustered mitochondria protein homolog (Kluyveromyces lactis (strain ATCC 8585 / CBS 2359 / DSM 70799 / NBRC 1267 / NRRL Y-1140 / WM37) (Yeast)).